The chain runs to 515 residues: Probable cytosol aminopeptidase (515 aa).

Mn(2+)-binding residues include Lys-279 and Asp-284. Lys-291 is an active-site residue. Mn(2+) contacts are provided by Asp-302, Asp-361, and Glu-363. The active site involves Arg-365.

Belongs to the peptidase M17 family. Mn(2+) serves as cofactor.

Its subcellular location is the cytoplasm. It carries out the reaction Release of an N-terminal amino acid, Xaa-|-Yaa-, in which Xaa is preferably Leu, but may be other amino acids including Pro although not Arg or Lys, and Yaa may be Pro. Amino acid amides and methyl esters are also readily hydrolyzed, but rates on arylamides are exceedingly low.. It catalyses the reaction Release of an N-terminal amino acid, preferentially leucine, but not glutamic or aspartic acids.. Presumably involved in the processing and regular turnover of intracellular proteins. Catalyzes the removal of unsubstituted N-terminal amino acids from various peptides. The sequence is that of Probable cytosol aminopeptidase from Mycobacterium tuberculosis (strain ATCC 25177 / H37Ra).